A 366-amino-acid polypeptide reads, in one-letter code: ERCC4 domain-containing protein EP364R (366 aa).

In terms of domain architecture, ERCC4 spans 3 to 101 (FLVADHREHH…QLYFFVEGPA (99 aa)).

This sequence belongs to the asfivirus EP364R family.

In terms of biological role, plays a role in the inhibition of type I interferon signaling pathway. Mechanistically, specifically interacts with 2',3'-cGAMP and cleaves it via its phosphodiesterase activity. In turn, prevents 2',3'-cGAMP interaction with host ER-resident STING1 leading to inhibition of downstream signaling pathway and type I interferon production. The chain is ERCC4 domain-containing protein EP364R from African swine fever virus (isolate Pig/Kenya/KEN-50/1950) (ASFV).